Consider the following 327-residue polypeptide: Thiamine-monophosphate kinase (327 aa).

Mg(2+) contacts are provided by aspartate 30, serine 45, serine 46, and aspartate 47. Histidine 54 is a substrate binding site. Aspartate 76 provides a ligand contact to Mg(2+). ATP is bound by residues tyrosine 106, 123 to 124 (GD), and arginine 149. Aspartate 124 is a Mg(2+) binding site. A Mg(2+)-binding site is contributed by aspartate 221. Serine 223 is an ATP binding site. Position 224 (aspartate 224) interacts with Mg(2+). Substrate is bound by residues glutamate 268 and phenylalanine 321.

The protein belongs to the thiamine-monophosphate kinase family.

It catalyses the reaction thiamine phosphate + ATP = thiamine diphosphate + ADP. The protein operates within cofactor biosynthesis; thiamine diphosphate biosynthesis; thiamine diphosphate from thiamine phosphate: step 1/1. Catalyzes the ATP-dependent phosphorylation of thiamine-monophosphate (TMP) to form thiamine-pyrophosphate (TPP), the active form of vitamin B1. The polypeptide is Thiamine-monophosphate kinase (Synechococcus elongatus (strain ATCC 33912 / PCC 7942 / FACHB-805) (Anacystis nidulans R2)).